Reading from the N-terminus, the 322-residue chain is Pyridoxal kinase (322 aa).

Met1 is modified (N-acetylmethionine). Ser22 and Thr57 together coordinate pyridoxal. Thr57 lines the pyridoxal 5'-phosphate pocket. At Ser69 the chain carries Phosphoserine. Position 123 (Asp123) interacts with ATP. Asp123 is a Na(+) binding site. Position 128 (Asp128) interacts with Mg(2+). Thr158 lines the Na(+) pocket. 160-163 (NQFE) contacts ATP. Ser174 is modified (phosphoserine). Thr196 is a Na(+) binding site. 196-197 (TS) contributes to the ATP binding site. Ser223 carries the post-translational modification Phosphoserine. ATP is bound by residues 236-238 (VDA) and Thr243. Pyridoxal 5'-phosphate is bound at residue 244-245 (GD). Asp245 (proton acceptor) is an active-site residue. Ser295 is modified (phosphoserine).

It belongs to the pyridoxine kinase family. As to quaternary structure, homodimer. Requires Zn(2+) as cofactor. The cofactor is Mg(2+). In terms of processing, the N-terminus is blocked.

Its subcellular location is the cytoplasm. The protein localises to the cytosol. The enzyme catalyses pyridoxal + ATP = pyridoxal 5'-phosphate + ADP + H(+). It catalyses the reaction pyridoxamine + ATP = pyridoxamine 5'-phosphate + ADP + H(+). The catalysed reaction is pyridoxine + ATP = pyridoxine 5'-phosphate + ADP + H(+). Its pathway is cofactor metabolism; pyridoxal 5'-phosphate salvage; pyridoxal 5'-phosphate from pyridoxal: step 1/1. It participates in cofactor metabolism; pyridoxal 5'-phosphate salvage; pyridoxine 5'-phosphate from pyridoxine: step 1/1. It functions in the pathway cofactor metabolism; pyridoxal 5'-phosphate salvage; pyridoxamine 5'-phosphate from pyridoxamine: step 1/1. Activity is increased in the presence of K(+)or Na(+). Its function is as follows. Catalyzes the phosphorylation of the dietary vitamin B6 vitamers pyridoxal (PL), pyridoxine (PN) and pyridoxamine (PM) to form pyridoxal 5'-phosphate (PLP), pyridoxine 5'-phosphate (PNP) and pyridoxamine 5'-phosphate (PMP), respectively. PLP is the active form of vitamin B6, and acts as a cofactor for over 140 different enzymatic reactions. The protein is Pyridoxal kinase (PDXK) of Sus scrofa (Pig).